The primary structure comprises 78 residues: Large ribosomal subunit protein bL28 (78 aa).

It belongs to the bacterial ribosomal protein bL28 family.

This is Large ribosomal subunit protein bL28 from Parasynechococcus marenigrum (strain WH8102).